A 410-amino-acid polypeptide reads, in one-letter code: Divergent protein kinase domain 1A (410 aa).

The Cytoplasmic segment spans residues Met1–Ser5. Residues Tyr6–Ile26 traverse the membrane as a helical segment. Residues Tyr27–Ser410 lie on the Lumenal side of the membrane.

This sequence belongs to the DIPK family. In terms of processing, among the many cysteines in the lumenal domain, most are probably involved in disulfide bonds.

Its subcellular location is the endoplasmic reticulum membrane. This chain is Divergent protein kinase domain 1A (dipk1a), found in Xenopus laevis (African clawed frog).